The chain runs to 317 residues: Acetyl-coenzyme A carboxylase carboxyl transferase subunit alpha (317 aa).

Positions 33–294 constitute a CoA carboxyltransferase C-terminal domain; it reads NLDDEITRLQ…KKRLLADLAD (262 aa).

Belongs to the AccA family. As to quaternary structure, acetyl-CoA carboxylase is a heterohexamer composed of biotin carboxyl carrier protein (AccB), biotin carboxylase (AccC) and two subunits each of ACCase subunit alpha (AccA) and ACCase subunit beta (AccD).

It is found in the cytoplasm. It catalyses the reaction N(6)-carboxybiotinyl-L-lysyl-[protein] + acetyl-CoA = N(6)-biotinyl-L-lysyl-[protein] + malonyl-CoA. Its pathway is lipid metabolism; malonyl-CoA biosynthesis; malonyl-CoA from acetyl-CoA: step 1/1. Functionally, component of the acetyl coenzyme A carboxylase (ACC) complex. First, biotin carboxylase catalyzes the carboxylation of biotin on its carrier protein (BCCP) and then the CO(2) group is transferred by the carboxyltransferase to acetyl-CoA to form malonyl-CoA. This Histophilus somni (strain 2336) (Haemophilus somnus) protein is Acetyl-coenzyme A carboxylase carboxyl transferase subunit alpha.